The sequence spans 495 residues: UDP-N-acetylmuramoyl-L-alanyl-D-glutamate--2,6-diaminopimelate ligase (495 aa).

UDP-N-acetyl-alpha-D-muramoyl-L-alanyl-D-glutamate-binding positions include leucine 27, serine 29, and 44-46; that span reads HKA. An ATP-binding site is contributed by 116-122; sequence GTNGKTT. Residues asparagine 157, 158–159, serine 185, glutamine 191, and arginine 193 contribute to the UDP-N-acetyl-alpha-D-muramoyl-L-alanyl-D-glutamate site; that span reads TT. Residue lysine 225 is modified to N6-carboxylysine. Meso-2,6-diaminopimelate contacts are provided by residues arginine 390, 414–417, glycine 465, and glutamate 469; that span reads DNPR. A Meso-diaminopimelate recognition motif motif is present at residues 414 to 417; it reads DNPR.

This sequence belongs to the MurCDEF family. MurE subfamily. Mg(2+) serves as cofactor. Carboxylation is probably crucial for Mg(2+) binding and, consequently, for the gamma-phosphate positioning of ATP.

The protein resides in the cytoplasm. The catalysed reaction is UDP-N-acetyl-alpha-D-muramoyl-L-alanyl-D-glutamate + meso-2,6-diaminopimelate + ATP = UDP-N-acetyl-alpha-D-muramoyl-L-alanyl-gamma-D-glutamyl-meso-2,6-diaminopimelate + ADP + phosphate + H(+). The protein operates within cell wall biogenesis; peptidoglycan biosynthesis. Functionally, catalyzes the addition of meso-diaminopimelic acid to the nucleotide precursor UDP-N-acetylmuramoyl-L-alanyl-D-glutamate (UMAG) in the biosynthesis of bacterial cell-wall peptidoglycan. The sequence is that of UDP-N-acetylmuramoyl-L-alanyl-D-glutamate--2,6-diaminopimelate ligase from Pectobacterium atrosepticum (strain SCRI 1043 / ATCC BAA-672) (Erwinia carotovora subsp. atroseptica).